The sequence spans 461 residues: Serine/threonine-protein kinase VHS1 (461 aa).

The region spanning 12-337 (YLITSQIGEG…KEVSSITSFT (326 aa)) is the Protein kinase domain. Residues 18–26 (IGEGAYGLV) and Lys-41 contribute to the ATP site. The Proton acceptor role is filled by Asp-185. Residues 384-433 (LSYTSSSEEEDGIKEGIDDDNGSRSGSFGTLDTDTGLHSSFTSTSCESDN) form a disordered region. Over residues 390-403 (SEEEDGIKEGIDDD) the composition is skewed to acidic residues. Polar residues predominate over residues 406–433 (SRSGSFGTLDTDTGLHSSFTSTSCESDN).

It belongs to the protein kinase superfamily. Ser/Thr protein kinase family.

Its subcellular location is the cytoplasm. It catalyses the reaction L-seryl-[protein] + ATP = O-phospho-L-seryl-[protein] + ADP + H(+). The catalysed reaction is L-threonyl-[protein] + ATP = O-phospho-L-threonyl-[protein] + ADP + H(+). In terms of biological role, probable serine/threonine protein kinase involved in the G1-S transition. This is Serine/threonine-protein kinase VHS1 (VHS1) from Saccharomyces cerevisiae (strain ATCC 204508 / S288c) (Baker's yeast).